We begin with the raw amino-acid sequence, 99 residues long: Plastocyanin (99 aa).

Residues 1–99 enclose the Plastocyanin-like domain; it reads LDVLLGGDDG…AGMVGKVTVN (99 aa). 4 residues coordinate Cu cation: His37, Cys84, His87, and Met92.

The protein belongs to the plastocyanin family. The cofactor is Cu(2+).

It is found in the plastid. The protein localises to the chloroplast thylakoid membrane. In terms of biological role, participates in electron transfer between P700 and the cytochrome b6-f complex in photosystem I. The chain is Plastocyanin (PETE) from Solanum tuberosum (Potato).